We begin with the raw amino-acid sequence, 198 residues long: LLGTGESGKSTFIKQMRIIHGAGYSEEDKRGFTKLVYQNIFTAMQAMIRAMETLKILYKYEQNKANALLIREVDVEKVTTFEHRYVHAIKTLWDDPGIQECYDRRREYQLSDSAKYYLADVDRIATSGYLPTQQDVLRVRVPTTGIIEYPFDLENIIFRMVDVGGQRSERRKWIHCFENVTSIMFLVALSEYDHVLVE.

Residues 1 to 11 (LLGTGESGKST) form a G1 motif region. The G-alpha domain maps to 1-198 (LLGTGESGKS…LSEYDHVLVE (198 aa)). Residues 3–10 (GTGESGKS) and 137–140 (LRVR) contribute to the GTP site. Ser-10 is a binding site for Mg(2+). Positions 135-143 (DVLRVRVPT) are G2 motif. Thr-143 lines the Mg(2+) pocket. Residues 158-167 (FRMVDVGGQR) form a G3 motif region.

This sequence belongs to the G-alpha family. G(q) subfamily. In terms of assembly, g proteins are composed of 3 units; alpha, beta and gamma. The alpha chain contains the guanine nucleotide binding site. Interacts with RGS22. Interacts with NTSR1.

The protein resides in the cell membrane. The protein localises to the cytoplasm. The catalysed reaction is GTP + H2O = GDP + phosphate + H(+). Guanine nucleotide-binding proteins (G proteins) function as transducers downstream of G protein-coupled receptors (GPCRs) in numerous signaling cascades. The alpha chain contains the guanine nucleotide binding site and alternates between an active, GTP-bound state and an inactive, GDP-bound state. Signaling by an activated GPCR promotes GDP release and GTP binding. The alpha subunit has a low GTPase activity that converts bound GTP to GDP, thereby terminating the signal. Both GDP release and GTP hydrolysis are modulated by numerous regulatory proteins. Signaling is mediated via phospholipase C-beta-dependent inositol lipid hydrolysis for signal propagation: activates phospholipase C-beta: following GPCR activation, GNA11 activates PLC-beta (PLCB1, PLCB2, PLCB3 or PLCB4), leading to production of diacylglycerol (DAG) and inositol 1,4,5-trisphosphate (IP3). Transduces FFAR4 signaling in response to long-chain fatty acids (LCFAs). Together with GNAQ, required for heart development. In the respiratory epithelium, transmits OXGR1-dependent signals that lead to downstream intracellular Ca(2+) release and mucocilliary clearance of airborne pathogens. In Canis lupus familiaris (Dog), this protein is Guanine nucleotide-binding protein subunit alpha-11 (GNA11).